A 673-amino-acid polypeptide reads, in one-letter code: UvrABC system protein B (673 aa).

Positions 28–414 (ASILQNKRSQ…EAGGEIVEQL (387 aa)) constitute a Helicase ATP-binding domain. 41-48 (GITGSGKT) serves as a coordination point for ATP. A Beta-hairpin motif is present at residues 94 to 117 (YYDYYQPEAYVPRTDTYIEKDMSI). Residues 433–595 (QVDDCLAEIR…ITPRTVKREI (163 aa)) enclose the Helicase C-terminal domain. The region spanning 633–668 (RLKIKECEKEMKKAAKEFRFEEAADWRDQMRRYQQI) is the UVR domain.

Belongs to the UvrB family. As to quaternary structure, forms a heterotetramer with UvrA during the search for lesions. Interacts with UvrC in an incision complex.

It is found in the cytoplasm. Functionally, the UvrABC repair system catalyzes the recognition and processing of DNA lesions. A damage recognition complex composed of 2 UvrA and 2 UvrB subunits scans DNA for abnormalities. Upon binding of the UvrA(2)B(2) complex to a putative damaged site, the DNA wraps around one UvrB monomer. DNA wrap is dependent on ATP binding by UvrB and probably causes local melting of the DNA helix, facilitating insertion of UvrB beta-hairpin between the DNA strands. Then UvrB probes one DNA strand for the presence of a lesion. If a lesion is found the UvrA subunits dissociate and the UvrB-DNA preincision complex is formed. This complex is subsequently bound by UvrC and the second UvrB is released. If no lesion is found, the DNA wraps around the other UvrB subunit that will check the other stand for damage. The protein is UvrABC system protein B of Protochlamydia amoebophila (strain UWE25).